The following is a 231-amino-acid chain: Ribonuclease 3 (231 aa).

Positions 5–134 (QKKLKNDYGL…FLGALFIDQG (130 aa)) constitute an RNase III domain. Position 47 (Glu-47) interacts with Mg(2+). Residue Asp-51 is part of the active site. The Mg(2+) site is built by Asn-120 and Glu-123. Residue Glu-123 is part of the active site. Residues 160 to 229 (DYKTELQEVL…AENAIKGQNH (70 aa)) enclose the DRBM domain.

Belongs to the ribonuclease III family. In terms of assembly, homodimer. The cofactor is Mg(2+).

The protein resides in the cytoplasm. The catalysed reaction is Endonucleolytic cleavage to 5'-phosphomonoester.. In terms of biological role, digests double-stranded RNA. Involved in the processing of primary rRNA transcript to yield the immediate precursors to the large and small rRNAs (23S and 16S). Processes some mRNAs, and tRNAs when they are encoded in the rRNA operon. Processes pre-crRNA and tracrRNA of type II CRISPR loci if present in the organism. This chain is Ribonuclease 3, found in Lactococcus lactis subsp. cremoris (strain MG1363).